A 534-amino-acid polypeptide reads, in one-letter code: MSGQQERAERQREELSASASPPSRFVLGLDVGSTVIRCHVYDQTARVRGSSAQKVENVYPQPGWVEIDPDSLWAQFVAVIKDAVKAAGVQMNQIVGLGISTQRATFITWNKKTGHHFHNFISWQDLRAAELVKSWNNSLIMKLLHGATRVLHFFSRSKVMLTVSRFNFSTQHATLRLTWILQNLSEVKRAVEEDNCCFGTIDTWLLYKLTKGSSYATDYSNASTTGFFDPYAMRWSRLITTMVSIPLSILPPVKDTSYNFGSVDEKIFGVPIPVVALVGDQQSAMFGECCFETGDVKLTMGTGTFLDINTGKNLQHVNGGFYPLIGWKIGQELVCLAEGNAGDTGTAIMWAQKLDLFTDAAETEKMALSLEDSEGVYFVPSFSGLQAPLNDPCACASFMGLKHSTNKYHLVRAILESIAFRNKQLYDMLQREIQIPVTNIRADGGVCNNAFVMQMTSDLINEKIDRPAHFDMSCLGAASLAGLAVGFWADKEELQKLRQSEMVFKPQKKWQEYEVNMENWVKAVKRSMNWYNKT.

Residues S33 and T34 each coordinate ATP. The glycerol site is built by R103, D280, and Q281. T302, G345, and G445 together coordinate ATP.

It belongs to the FGGY kinase family. Expressed predominantly in sebaceous glands.

It localises to the cytoplasm. It carries out the reaction glycerol + ATP = sn-glycerol 3-phosphate + ADP + H(+). Its pathway is polyol metabolism; glycerol degradation via glycerol kinase pathway; sn-glycerol 3-phosphate from glycerol: step 1/1. Functionally, skin-specific kinase that plays a key role in glycerol metabolism, catalyzing its phosphorylation to produce sn-glycerol 3-phosphate. Involved in skin-specific regulation of sterol regulatory element-binding protein (SREBP) processing and lipid biosynthesis. This Mus musculus (Mouse) protein is Glycerol kinase 5 (Gk5).